The primary structure comprises 255 residues: MRILCTNDDGIYAPGLEIIEQIAKDLSDDVWVVAPEHDQSGVSHSLTLNDPLRLRQIGPRHFAVKGTPTDCVIMGSRYILADKAPDLVLSGVNRGRNLAEDVVYSGTVAGALEGTMLGLPSFALSQEFSMETGDRPVWETARTFAPQILRRVIEIGIPKNTVVNVNFPACAPEDVAGVLVTRMGKRNLGFLKIDERRDGRGNPYFWIGFEKADDADTPASGSDLAAIAGQCVSVTPLRLDRTDEAFAAILTAKLK.

A divalent metal cation-binding residues include Asp-8, Asp-9, Ser-40, and Asn-93.

This sequence belongs to the SurE nucleotidase family. A divalent metal cation is required as a cofactor.

It localises to the cytoplasm. It catalyses the reaction a ribonucleoside 5'-phosphate + H2O = a ribonucleoside + phosphate. Functionally, nucleotidase that shows phosphatase activity on nucleoside 5'-monophosphates. The chain is 5'-nucleotidase SurE from Nitrobacter winogradskyi (strain ATCC 25391 / DSM 10237 / CIP 104748 / NCIMB 11846 / Nb-255).